Here is a 338-residue protein sequence, read N- to C-terminus: Large ribosomal subunit protein uL10 (338 aa).

The tract at residues 297 to 338 (PSAQQTQTQQSTAEEKKEEKKEEEKKGPSEEEIGSGLASLFG) is disordered. A compositionally biased stretch (low complexity) spans 298 to 308 (SAQQTQTQQST). Over residues 309-325 (AEEKKEEKKEEEKKGPS) the composition is skewed to basic and acidic residues.

This sequence belongs to the universal ribosomal protein uL10 family. Part of the 50S ribosomal subunit. Forms part of the ribosomal stalk which helps the ribosome interact with GTP-bound translation factors. Forms a heptameric L10(L12)2(L12)2(L12)2 complex, where L10 forms an elongated spine to which the L12 dimers bind in a sequential fashion.

In terms of biological role, forms part of the ribosomal stalk, playing a central role in the interaction of the ribosome with GTP-bound translation factors. In Saccharolobus islandicus (strain M.14.25 / Kamchatka #1) (Sulfolobus islandicus), this protein is Large ribosomal subunit protein uL10.